The sequence spans 152 residues: Psoriasis susceptibility 1 candidate gene 1 protein (152 aa).

The span at 1 to 31 (MTCTDQKSHSQRALGTQTPALQGPQLLNTDP) shows a compositional bias: polar residues. Residues 1 to 42 (MTCTDQKSHSQRALGTQTPALQGPQLLNTDPSSEETRPPHVN) are disordered.

Expressed in skin. Also found in heart, placenta, liver, skeletal muscle and pancreas.

This is Psoriasis susceptibility 1 candidate gene 1 protein (PSORS1C1) from Homo sapiens (Human).